Here is a 273-residue protein sequence, read N- to C-terminus: 4-hydroxy-tetrahydrodipicolinate reductase (273 aa).

Residues 12 to 17 (GAGGRM) and glutamate 38 each bind NAD(+). Position 39 (arginine 39) interacts with NADP(+). NAD(+) is bound by residues 102–104 (GTT) and 126–129 (AANF). The Proton donor/acceptor role is filled by histidine 159. Histidine 160 is a binding site for (S)-2,3,4,5-tetrahydrodipicolinate. The Proton donor role is filled by lysine 163. 169–170 (GT) contributes to the (S)-2,3,4,5-tetrahydrodipicolinate binding site.

It belongs to the DapB family. Homotetramer.

It is found in the cytoplasm. The catalysed reaction is (S)-2,3,4,5-tetrahydrodipicolinate + NAD(+) + H2O = (2S,4S)-4-hydroxy-2,3,4,5-tetrahydrodipicolinate + NADH + H(+). The enzyme catalyses (S)-2,3,4,5-tetrahydrodipicolinate + NADP(+) + H2O = (2S,4S)-4-hydroxy-2,3,4,5-tetrahydrodipicolinate + NADPH + H(+). Its pathway is amino-acid biosynthesis; L-lysine biosynthesis via DAP pathway; (S)-tetrahydrodipicolinate from L-aspartate: step 4/4. In terms of biological role, catalyzes the conversion of 4-hydroxy-tetrahydrodipicolinate (HTPA) to tetrahydrodipicolinate. This chain is 4-hydroxy-tetrahydrodipicolinate reductase, found in Salmonella enteritidis PT4 (strain P125109).